A 361-amino-acid polypeptide reads, in one-letter code: MSFNTFGHMFRVTTFGESHGVAIGCVVDGCPPLIPLTEADIQGDLDRRRPGQSRFTTQRQEADQVKIVSGVMAHPESGAQVTTGTPIALMIENTDQRSKDYSDIKDKYRPGHADFTYEAKYGIRDYRGGGRSSARETASRVAAGAIARKVITGMSVRGALVQIGPHKIDREKWDWDEIGNNPFFCPDKDAASVWEAYLDGIRKSGSSIGAVIEVIAEGVPAGLGAPIYAKLDGDIAAALMSINAVKGVEIGDGFATAALTGEENADEMRMGNHGPAFLSNHAGGILGGISTGQPVVARFAVKPTSSILSPRRTVDREGHDTDILTKGRHDPCVGIRAVPVGEAMVACVLADHLLRHRGQVG.

NADP(+)-binding residues include Arg-48 and Arg-54. FMN contacts are provided by residues 131-133 (RSS), 243-244 (NA), Gly-287, 302-306 (KPTSS), and Arg-328.

This sequence belongs to the chorismate synthase family. In terms of assembly, homotetramer. FMNH2 serves as cofactor.

The catalysed reaction is 5-O-(1-carboxyvinyl)-3-phosphoshikimate = chorismate + phosphate. Its pathway is metabolic intermediate biosynthesis; chorismate biosynthesis; chorismate from D-erythrose 4-phosphate and phosphoenolpyruvate: step 7/7. Its function is as follows. Catalyzes the anti-1,4-elimination of the C-3 phosphate and the C-6 proR hydrogen from 5-enolpyruvylshikimate-3-phosphate (EPSP) to yield chorismate, which is the branch point compound that serves as the starting substrate for the three terminal pathways of aromatic amino acid biosynthesis. This reaction introduces a second double bond into the aromatic ring system. This is Chorismate synthase from Rhodopseudomonas palustris (strain BisB5).